The primary structure comprises 443 residues: Signal recognition particle 54 kDa protein (443 aa).

Residues 104 to 111 (GLQGSGKT), 184 to 188 (DTAGR), and 242 to 245 (TKLD) contribute to the GTP site.

It belongs to the GTP-binding SRP family. SRP54 subfamily. Part of the signal recognition particle protein translocation system, which is composed of SRP and FtsY. Archaeal SRP consists of a 7S RNA molecule of 300 nucleotides and two protein subunits: SRP54 and SRP19.

It localises to the cytoplasm. It carries out the reaction GTP + H2O = GDP + phosphate + H(+). Involved in targeting and insertion of nascent membrane proteins into the cytoplasmic membrane. Binds to the hydrophobic signal sequence of the ribosome-nascent chain (RNC) as it emerges from the ribosomes. The SRP-RNC complex is then targeted to the cytoplasmic membrane where it interacts with the SRP receptor FtsY. This chain is Signal recognition particle 54 kDa protein, found in Methanosarcina barkeri (strain Fusaro / DSM 804).